The primary structure comprises 218 residues: Thiopurine S-methyltransferase (218 aa).

Residues Trp10, Leu45, Glu66, and Arg123 each coordinate S-adenosyl-L-methionine.

Belongs to the class I-like SAM-binding methyltransferase superfamily. TPMT family.

The protein localises to the cytoplasm. The enzyme catalyses S-adenosyl-L-methionine + a thiopurine = S-adenosyl-L-homocysteine + a thiopurine S-methylether.. In Pseudomonas aeruginosa (strain LESB58), this protein is Thiopurine S-methyltransferase.